The sequence spans 173 residues: Bilin biosynthesis protein PecF (173 aa).

The protein belongs to the CpcE/RpcE/PecE family.

An enzyme involved in the biosynthesis of bilin. The polypeptide is Bilin biosynthesis protein PecF (pecF) (Nostoc sp. (strain PCC 7120 / SAG 25.82 / UTEX 2576)).